We begin with the raw amino-acid sequence, 290 residues long: Thioredoxin-like protein 1 (290 aa).

The 81-residue stretch at 24 to 104 folds into the Thioredoxin domain; the sequence is VDCYADWCGP…PQALKEKVAL (81 aa). Cysteine 31 and cysteine 34 are disulfide-bonded. Residues 118-290 enclose the PITH domain; sequence SSSAPVKGFA…SKGKLQKVEA (173 aa).

It localises to the cytoplasm. The protein localises to the nucleus. Has a role in cellular detoxification of alkyl hydroperoxide. This Schizosaccharomyces pombe (strain 972 / ATCC 24843) (Fission yeast) protein is Thioredoxin-like protein 1 (txl1).